The chain runs to 945 residues: Chaperone protein ClpD, chloroplastic (945 aa).

The N-terminal 89 residues, 1–89 (MEVLSTSSPL…FERFTERAIR (89 aa)), are a transit peptide targeting the chloroplast. Repeat regions lie at residues 90-146 (AIIF…WDEA) and 168-233 (FSIS…LKGE). A Clp R domain is found at 90 to 233 (AIIFSQKEAK…AAALTRLKGE (144 aa)). The tract at residues 233 to 264 (EIAKDGREPSSSSKGSFESPPSGRIAGSGPGG) is disordered. Low complexity predominate over residues 241–255 (PSSSSKGSFESPPSG). The interval 271 to 523 (LEQFCVDLTA…RARIEAFRKK (253 aa)) is i. Residue 316–323 (GEAGVGKT) participates in ATP binding. The disordered stretch occupies residues 555–586 (SRQKQDDGDAISDESGELVEESSLPPAAGDDE). Residues 562-574 (GDAISDESGELVE) are compositionally biased toward acidic residues. The tract at residues 590-781 (VGPDDIAAVA…LIIMTSNVGS (192 aa)) is II. An ATP-binding site is contributed by 664 to 671 (GPTGVGKT).

It belongs to the ClpA/ClpB family. ClpD subfamily. As to quaternary structure, homodimer and homohexamer. Hexamerization upon addition of ATP. Interacts with CLPT1. Stably associated with the import machinery. Requires Mg(2+) as cofactor. As to expression, expressed in stems and leaves.

It is found in the plastid. The protein localises to the chloroplast stroma. It catalyses the reaction ATP + H2O = ADP + phosphate + H(+). Molecular chaperone that interact with a ClpP-like protease involved in degradation of denatured proteins in the chloroplast. The ATPase activity of CLPD is stimulated by CLPT1. Has no ADPase activity. Interacts with transit peptides with a positional preference. Localization of the signal sequence at the N-terminal end of a protein seems mandatory for interaction to take place. The polypeptide is Chaperone protein ClpD, chloroplastic (Arabidopsis thaliana (Mouse-ear cress)).